A 681-amino-acid chain; its full sequence is Minichromosome maintenance domain-containing protein 2 (681 aa).

Ser-292 bears the Phosphoserine mark. The MCM domain maps to Lys-533–Ser-621.

Its function is as follows. Plays an important role in meiotic recombination and associated DNA double-strand break repair. This Rattus norvegicus (Rat) protein is Minichromosome maintenance domain-containing protein 2 (Mcmdc2).